The chain runs to 147 residues: Deoxyuridine 5'-triphosphate nucleotidohydrolase (147 aa).

Arg-24 contributes to the Mg(2+) binding site. Residues 68–70 (PRS), 82–85 (GVID), Tyr-88, Gly-93, Ile-95, and Arg-111 each bind dUTP.

It belongs to the dUTPase family.

It carries out the reaction dUTP + H2O = dUMP + diphosphate + H(+). In terms of biological role, this enzyme is involved in nucleotide metabolism: it produces dUMP, the immediate precursor of thymidine nucleotides and it decreases the intracellular concentration of dUTP so that uracil cannot be incorporated into DNA. This Homo sapiens (Human) protein is Deoxyuridine 5'-triphosphate nucleotidohydrolase (OPG046).